A 330-amino-acid polypeptide reads, in one-letter code: MPTDNAIDVDLLVIGAGPTGLFATYYAGFRGFRVAVVDSLPELGGQITAMYPEKQILDVAGFPSVKGRDLVEGLVAQAATADPTYLLDRTATTLHEDDDAENGAVVVGLDDGTEVRAKAVLITAGIGKFSPRPLPAGDGWLGRGLEFFVPSFAPYAGKDVVIVGGGDSAFDWALHLEPVARSVTLVHRRDGFRAHQRTVEAVQASSVQIVTRAEVSAIRGNGVVESIEITVDGESTERPAQAIVAALGFVADLGPLQQWGLDVEKRHLVVDSSMRTNLARVFAAGDITEYPGKVRLIAVGFGEAATAVNNAAVVIDPSAHVFPGHSSEGS.

Residues T19, D38, Q46, Y51, A91, F129, D286, and S327 each contribute to the FAD site.

Belongs to the ferredoxin--NADP reductase type 2 family. Homodimer. FAD serves as cofactor.

The enzyme catalyses 2 reduced [2Fe-2S]-[ferredoxin] + NADP(+) + H(+) = 2 oxidized [2Fe-2S]-[ferredoxin] + NADPH. The polypeptide is Ferredoxin--NADP reductase (Nocardioides sp. (strain ATCC BAA-499 / JS614)).